An 876-amino-acid chain; its full sequence is MAP7 domain-containing protein 3 (876 aa).

Disordered regions lie at residues 30–139, 162–200, and 402–438; these read AEER…KFKA, GGVM…VDNT, and TEAP…IDKR. Residues 39–54 are compositionally biased toward polar residues; sequence INSSAGANKRSSSTPD. A coiled-coil region spans residues 58–136; it reads LKNDVKQQLA…KQKQAEDTEK (79 aa). Basic and acidic residues-rich tracts occupy residues 60 to 139 and 169 to 196; these read NDVK…KFKA and KSGK…DMQH. Ser-417 and Ser-483 each carry phosphoserine. Coiled coils occupy residues 549 to 578 and 626 to 658; these read IQIR…IARK and SAMM…RRKA. 2 disordered regions span residues 558–683 and 742–783; these read QSKN…EIFP and IQGK…NPNH. Basic and acidic residues-rich tracts occupy residues 559-590 and 630-659; these read SKNE…DKVP and KSRD…RKAS. The segment covering 665–679 has biased composition (acidic residues); that stretch reads SEDEADDEGESEDSL. The span at 750 to 763 shows a compositional bias: basic residues; the sequence is SAKKPPTRPIRSRK. Positions 771–782 are enriched in polar residues; the sequence is IRPTQSASSNPN.

This sequence belongs to the MAP7 family. In terms of tissue distribution, high expression in lung, skeletal muscle, brain, and kidney, with much weaker expression in spleen, small intestine, liver, and heart.

Its subcellular location is the cytoplasm. It localises to the cytoskeleton. The protein resides in the spindle. Its function is as follows. Promotes the assembly and stability of microtubules. In Mus musculus (Mouse), this protein is MAP7 domain-containing protein 3 (Map7d3).